Consider the following 144-residue polypeptide: Large ribosomal subunit protein uL11 (144 aa).

The protein belongs to the universal ribosomal protein uL11 family. Part of the ribosomal stalk of the 50S ribosomal subunit. Interacts with L10 and the large rRNA to form the base of the stalk. L10 forms an elongated spine to which L12 dimers bind in a sequential fashion forming a multimeric L10(L12)X complex. In terms of processing, one or more lysine residues are methylated.

In terms of biological role, forms part of the ribosomal stalk which helps the ribosome interact with GTP-bound translation factors. This is Large ribosomal subunit protein uL11 from Streptomyces sp. (strain FRI-5).